A 354-amino-acid polypeptide reads, in one-letter code: Methionine aminotransferase BCAT4 (354 aa).

At Lys-198 the chain carries N6-(pyridoxal phosphate)lysine.

The protein belongs to the class-IV pyridoxal-phosphate-dependent aminotransferase family. Pyridoxal 5'-phosphate serves as cofactor. As to expression, mostly expressed in phloem.

The protein localises to the cytoplasm. It carries out the reaction a 2-oxocarboxylate + L-methionine = 4-methylsulfanyl-2-oxobutanoate + an L-alpha-amino acid. Its function is as follows. Converts 2-oxo acids to branched-chain amino acids. Shows activity with L-Leu, L-Ile and L-Val as amino donors and alpha-keto-glutarate as an amino acceptor, but no activity for D-isomers of Leu, Ile, Val, Asp, Glu or Ala. Acts on methionine and its derivatives and the corresponding 2-oxo acids. Catalyzes the initial deamination of methionine to 4-methylthio-2-oxobutyrate as well as the transamination of other typical intermediates of the methionine chain elongation pathway. The sequence is that of Methionine aminotransferase BCAT4 (BCAT4) from Arabidopsis thaliana (Mouse-ear cress).